We begin with the raw amino-acid sequence, 402 residues long: Argininosuccinate synthase (402 aa).

ATP contacts are provided by residues 11–19 (AYSGGLDTS) and Ala39. L-citrulline-binding residues include Tyr90 and Ser95. Gly120 is a binding site for ATP. 3 residues coordinate L-aspartate: Thr122, Asn126, and Asp127. Asn126 lines the L-citrulline pocket. L-citrulline-binding residues include Arg130, Ser179, Ser188, Glu264, and Tyr276.

The protein belongs to the argininosuccinate synthase family. Type 1 subfamily. Homotetramer.

It is found in the cytoplasm. The enzyme catalyses L-citrulline + L-aspartate + ATP = 2-(N(omega)-L-arginino)succinate + AMP + diphosphate + H(+). Its pathway is amino-acid biosynthesis; L-arginine biosynthesis; L-arginine from L-ornithine and carbamoyl phosphate: step 2/3. This chain is Argininosuccinate synthase, found in Roseiflexus castenholzii (strain DSM 13941 / HLO8).